The sequence spans 871 residues: MASQRFVIALHSFPGKSSDELPLVEGRKYLLIKMDEEFGDGWWEGEDEQGNRGIFPASHVELISDERSDSSDSRRGKEDFSISTAEVTRSSLSSSRSTSSRSDKDSEKLYSNNSLSSSHSSILNGPLDSLSKPSVPSNFNSMFPSSKQEGPSPLLDNQPSSDLSNFNTIDADYNNASASTSAPATSASLKKVLSAEDSVRETITDIETALQNMSTSASRTPNDSSPLPYIENRPASSLAVSEKIQNVPNWSTEEVVEWLMNAGLGSVAPNFAENEITGEILLGLDSNVLKELNITSFGKRFEVLRKIQQLKDSYEQSLYEEYPQFAEPISVSQSSDSSSSIPKKSNDEAGGSPSKSSPTRPGFNDYVNRPTSVMPSLSNMIVSPDLDSSPSTDWNQYVIPPLATPSSRNSKSTQSAVPENVSRFDSNEPSATSPILKRSSPTDSISQNSGLPSRLTEPISSPSTSSIDVDKEGTSFPGLPYHSSKGNLYAPQPSSNVPTKFTGGASESSSVPPRPIPSAMKGKAPASAISIEALEELDPPKITTIDGESPSSISSRLPSSNLEQGSSSSVTKSPESMPDPSAKASSPVTSKGVSINEKSAVNNYATPLSKPQPKDTKGSKLGNTFVAPSPAASLPASPPVGTELKTRPTLRSVASSPLNKEPIGKRKSKRDIFGRQKVLPTGISEGLSNIPAKEAIKTADCHGWMRKRSDRYGVWKSRYFVLKGTRLSYYHSLNDASEKGLIDMTSHRVTKTDDIVLSGGKTAIKLIPPAPGAAKAAVMFTPPKVHYFTCENNEELHRWSSAFLKATVERDMSVPVLTTSRMPTISLSKAKELRTRPPSLLIDDENEANLTSSIGLKKNAKQKNKKSSKQK.

Positions 2–65 constitute an SH3 domain; the sequence is ASQRFVIALH…PASHVELISD (64 aa). The segment at 42-168 is disordered; the sequence is WWEGEDEQGN…PSSDLSNFNT (127 aa). Basic and acidic residues predominate over residues 62-80; it reads LISDERSDSSDSRRGKEDF. Composition is skewed to low complexity over residues 88–100 and 109–124; these read TRSS…STSS and LYSN…SILN. Residues 131 to 168 are compositionally biased toward polar residues; the sequence is SKPSVPSNFNSMFPSSKQEGPSPLLDNQPSSDLSNFNT. S224 and S225 each carry phosphoserine. Y229 is subject to Phosphotyrosine. Position 241 is a phosphoserine (S241). The region spanning 250 to 313 is the SAM domain; the sequence is WSTEEVVEWL…LRKIQQLKDS (64 aa). Low complexity predominate over residues 329 to 343; sequence ISVSQSSDSSSSIPK. Disordered regions lie at residues 329-371 and 384-670; these read ISVS…NRPT and PDLD…KSKR. Composition is skewed to polar residues over residues 384–395 and 404–451; these read PDLDSSPSTDWN and TPSS…NSGL. Residues S433, S439, and S440 each carry the phosphoserine modification. Phosphothreonine is present on T442. The residue at position 444 (S444) is a Phosphoserine. A compositionally biased stretch (low complexity) spans 456 to 467; sequence TEPISSPSTSSI. The span at 492-511 shows a compositional bias: polar residues; the sequence is QPSSNVPTKFTGGASESSSV. A Phosphoserine modification is found at S549. Positions 549 to 560 are enriched in low complexity; that stretch reads SPSSISSRLPSS. 2 stretches are compositionally biased toward polar residues: residues 561 to 574 and 583 to 606; these read NLEQ…TKSP and KASS…NYAT. In terms of domain architecture, PH spans 698 to 808; that stretch reads TADCHGWMRK…WSSAFLKATV (111 aa).

Its subcellular location is the cytoplasm. The protein resides in the membrane. Functionally, has a role in cell elongation and separation. The chain is Protein pob1 (pob1) from Schizosaccharomyces pombe (strain 972 / ATCC 24843) (Fission yeast).